The chain runs to 527 residues: Peptide chain release factor 3 (527 aa).

Positions 9–278 (NKRRTFAIIS…GLTQWAPKPQ (270 aa)) constitute a tr-type G domain. Residues 18–25 (SHPDAGKT), 86–90 (DTPGH), and 140–143 (NKLD) each bind GTP.

The protein belongs to the TRAFAC class translation factor GTPase superfamily. Classic translation factor GTPase family. PrfC subfamily.

The protein resides in the cytoplasm. Its function is as follows. Increases the formation of ribosomal termination complexes and stimulates activities of RF-1 and RF-2. It binds guanine nucleotides and has strong preference for UGA stop codons. It may interact directly with the ribosome. The stimulation of RF-1 and RF-2 is significantly reduced by GTP and GDP, but not by GMP. The sequence is that of Peptide chain release factor 3 from Haemophilus influenzae (strain PittEE).